The sequence spans 66 residues: Clarkitoxin-1 (66 aa).

4 disulfide bridges follow: Cys-3/Cys-24, Cys-17/Cys-42, Cys-46/Cys-59, and Cys-60/Cys-65.

As to expression, expressed by the venom gland.

It localises to the secreted. Its function is as follows. Not toxic to mice when injected intravenously or intraperitoneally. The chain is Clarkitoxin-1 from Micrurus clarki (Clark's coral snake).